The primary structure comprises 169 residues: N-alpha-acetyltransferase 50 (169 aa).

One can recognise an N-acetyltransferase domain in the interval 5–154; that stretch reads IELGDVTPHN…DAHVLQKNLK (150 aa). A substrate-binding site is contributed by tyrosine 30. Tyrosine 72 is an active-site residue. Methionine 74 contributes to the substrate binding site. Residue 76-89 coordinates acetyl-CoA; it reads LGCLAPYRRLGIGT. 78-89 is a CoA binding site; it reads CLAPYRRLGIGT. Histidine 111 is a catalytic residue. Position 116 to 125 (116 to 125) interacts with CoA; sequence NESAIDFYRK. Residues 137–140 form a substrate region; that stretch reads YYKR.

Belongs to the acetyltransferase family. GNAT subfamily.

It is found in the cytoplasm. The protein localises to the nucleus. The catalysed reaction is N-terminal L-methionyl-L-alanyl-[protein] + acetyl-CoA = N-terminal N(alpha)-acetyl-L-methionyl-L-alanyl-[protein] + CoA + H(+). It catalyses the reaction N-terminal L-methionyl-L-seryl-[protein] + acetyl-CoA = N-terminal N(alpha)-acetyl-L-methionyl-L-seryl-[protein] + CoA + H(+). The enzyme catalyses N-terminal L-methionyl-L-valyl-[protein] + acetyl-CoA = N-terminal N(alpha)-acetyl-L-methionyl-L-valyl-[protein] + CoA + H(+). It carries out the reaction N-terminal L-methionyl-L-threonyl-[protein] + acetyl-CoA = N-terminal N(alpha)-acetyl-L-methionyl-L-threonyl-[protein] + CoA + H(+). The catalysed reaction is N-terminal L-methionyl-L-lysyl-[protein] + acetyl-CoA = N-terminal N(alpha)-acetyl-L-methionyl-L-lysyl-[protein] + CoA + H(+). It catalyses the reaction N-terminal L-methionyl-L-leucyl-[protein] + acetyl-CoA = N-terminal N(alpha)-acetyl-L-methionyl-L-leucyl-[protein] + CoA + H(+). The enzyme catalyses N-terminal L-methionyl-L-phenylalanyl-[protein] + acetyl-CoA = N-terminal N(alpha)-acetyl-L-methionyl-L-phenylalanyl-[protein] + CoA + H(+). It carries out the reaction N-terminal L-methionyl-L-tyrosyl-[protein] + acetyl-CoA = N-terminal N(alpha)-acetyl-L-methionyl-L-tyrosyl-[protein] + CoA + H(+). In terms of biological role, N-alpha-acetyltransferase that acetylates the N-terminus of proteins that retain their initiating methionine. Has a broad substrate specificity: able to acetylate the initiator methionine of most peptides, except for those with a proline in second position. Also displays N-epsilon-acetyltransferase activity by mediating acetylation of the side chain of specific lysines on proteins. The relevance of N-epsilon-acetyltransferase activity is however unclear. Required for sister chromatid cohesion during mitosis by promoting binding of CDCA5/sororin to cohesin. The chain is N-alpha-acetyltransferase 50 (naa50) from Xenopus tropicalis (Western clawed frog).